A 435-amino-acid polypeptide reads, in one-letter code: Methylenetetrahydrofolate--tRNA-(uracil-5-)-methyltransferase TrmFO (435 aa).

9 to 14 (GAGLAG) serves as a coordination point for FAD.

It belongs to the MnmG family. TrmFO subfamily. It depends on FAD as a cofactor.

It is found in the cytoplasm. It carries out the reaction uridine(54) in tRNA + (6R)-5,10-methylene-5,6,7,8-tetrahydrofolate + NADH + H(+) = 5-methyluridine(54) in tRNA + (6S)-5,6,7,8-tetrahydrofolate + NAD(+). The catalysed reaction is uridine(54) in tRNA + (6R)-5,10-methylene-5,6,7,8-tetrahydrofolate + NADPH + H(+) = 5-methyluridine(54) in tRNA + (6S)-5,6,7,8-tetrahydrofolate + NADP(+). Catalyzes the folate-dependent formation of 5-methyl-uridine at position 54 (M-5-U54) in all tRNAs. The chain is Methylenetetrahydrofolate--tRNA-(uracil-5-)-methyltransferase TrmFO from Staphylococcus haemolyticus (strain JCSC1435).